The sequence spans 145 residues: D-aminoacyl-tRNA deacylase (145 aa).

The Gly-cisPro motif, important for rejection of L-amino acids signature appears at 137 to 138 (GP).

The protein belongs to the DTD family. As to quaternary structure, homodimer.

The protein localises to the cytoplasm. It carries out the reaction glycyl-tRNA(Ala) + H2O = tRNA(Ala) + glycine + H(+). The catalysed reaction is a D-aminoacyl-tRNA + H2O = a tRNA + a D-alpha-amino acid + H(+). Functionally, an aminoacyl-tRNA editing enzyme that deacylates mischarged D-aminoacyl-tRNAs. Also deacylates mischarged glycyl-tRNA(Ala), protecting cells against glycine mischarging by AlaRS. Acts via tRNA-based rather than protein-based catalysis; rejects L-amino acids rather than detecting D-amino acids in the active site. By recycling D-aminoacyl-tRNA to D-amino acids and free tRNA molecules, this enzyme counteracts the toxicity associated with the formation of D-aminoacyl-tRNA entities in vivo and helps enforce protein L-homochirality. The polypeptide is D-aminoacyl-tRNA deacylase (Dinoroseobacter shibae (strain DSM 16493 / NCIMB 14021 / DFL 12)).